The primary structure comprises 1037 residues: MARSPTSVMISSLLLLLLIGPASSDDAAAAAAARTSTGGVAGDELALLSFKSSLLHQGGLSLASWNTSGHGQHCTWVGVVCGRRRRRHPHRVVKLLLRSSNLSGIISPSLGNLSFLRELDLSDNYLSGEIPPELSRLSRLQLLELSGNSIQGSIPAAIGACTKLTSLDLSHNQLRGMIPREIGASLKHLSNLYLHTNGLSGEIPSALGNLTSLQYFDLSCNRLSGAIPSSLGQLSSSLLTMNLRQNNLSGMIPNSIWNLSSLRAFSVSENKLGGMIPTNAFKTLHLLEVIDMGTNRFYGKIPASVANASHLTQLQIDGNLFSGIITSGFGRLRNLTTLYLWRNLFQTREQEDWGFISDLTNCSKLQTLDLGENNLGGVLPNSFSNLSTSLSFLALDLNKITGSIPKDIGNLIGLQHLYLCNNNFRGSLPSSLGRLRNLGILVAYENNLSGSIPLAIGNLTELNILLLGTNKFSGWIPYTLSNLTNLLSLGLSTNNLSGPIPSELFNIQTLSIMINVSKNNLEGSIPQEIGHLKNLVEFHAESNRLSGKIPNTLGDCQLLRYLYLQNNLLSGSIPSALGQLKGLETLDLSSNNLSGQIPTSLADITMLHSLNLSFNSFMGEVPTIGAFADASGISIQGNAKLCGGIPDLHLPRCCPLLENRKHFPVLPISVSLVAALAILSSLYLLITWHKRTKKGAPSRTSMKGHPLVSYSQLVKATDGFAPTNLLGSGSFGSVYKGKLNIQDHVAVKVLKLENPKALKSFTAECEALRNMRHRNLVKIVTICSSIDNRGNDFKAIVYDFMPSGSLEDWIHPETNDPADQRHLNLHRRVTILLDVACALDYLHRHGPEPVVHCDVKSSNVLLDSDMVAHVGDFGLARILVDGTSLIQQSTSSMGFRGTIGYAAPEYGVGHIASTHGDIYSYGILVLEIVTGKRPTDSTFRPDLGLRQYVELGLHGRVTDVVDTKLILDSENWLNSTNNSPCRRITECIVSLLRLGLSCSQVLPLSRTPTGDIIDELNAIKQNLSGLFPVCEGASLEF.

A signal peptide spans 1–24; sequence MARSPTSVMISSLLLLLLIGPASS. Topologically, residues 25–665 are extracellular; the sequence is DDAAAAAAAR…LLENRKHFPV (641 aa). N66, N101, and N112 each carry an N-linked (GlcNAc...) asparagine glycan. LRR repeat units lie at residues 89 to 112, 113 to 137, 138 to 161, 163 to 185, 187 to 210, 211 to 234, 236 to 259, 260 to 283, 285 to 308, 310 to 331, and 333 to 355; these read PHRVVKLLLRSSNLSGIISPSLGN, LSFLRELDLSDNYLSGEIPPELSRL, SRLQLLELSGNSIQGSIPAAIGAC, KLTSLDLSHNQLRGMIPREIGAS, KHLSNLYLHTNGLSGEIPSALGNL, TSLQYFDLSCNRLSGAIPSSLGQL, SSLLTMNLRQNNLSGMIPNSIWNL, SSLRAFSVSENKLGGMIPTNAFKT, HLLEVIDMGTNRFYGKIPASVANA, HLTQLQIDGNLFSGIITSGFGR, and RNLTTLYLWRNLFQTREQEDWGF. N209 carries N-linked (GlcNAc...) asparagine glycosylation. 2 N-linked (GlcNAc...) asparagine glycosylation sites follow: N247 and N258. N-linked (GlcNAc...) asparagine glycosylation occurs at N307. Residues N334, N361, and N385 are each glycosylated (N-linked (GlcNAc...) asparagine). LRR repeat units lie at residues 362-385, 387-411, 412-435, 437-459, 460-482, 483-507, 509-532, 533-556, 557-580, 581-604, and 606-629; these read CSKLQTLDLGENNLGGVLPNSFSN, STSLSFLALDLNKITGSIPKDIGNL, IGLQHLYLCNNNFRGSLPSSLGRL, NLGILVAYENNLSGSIPLAIGNL, TELNILLLGTNKFSGWIPYTLSN, LTNLLSLGLSTNNLSGPIPSELFNI, TLSIMINVSKNNLEGSIPQEIGHL, KNLVEFHAESNRLSGKIPNTLGDC, QLLRYLYLQNNLLSGSIPSALGQL, KGLETLDLSSNNLSGQIPTSLADI, and MLHSLNLSFNSFMGEVPTIGAFAD. Residues N447, N458, N482, N495, and N515 are each glycosylated (N-linked (GlcNAc...) asparagine). Residues N592 and N611 are each glycosylated (N-linked (GlcNAc...) asparagine). Residues 666–686 form a helical membrane-spanning segment; that stretch reads LPISVSLVAALAILSSLYLLI. Topologically, residues 687–1037 are cytoplasmic; it reads TWHKRTKKGA…PVCEGASLEF (351 aa). The Nuclear localization signal signature appears at 689-694; the sequence is HKRTKK. S698 is modified (phosphoserine). T700 carries the phosphothreonine modification. At S701 the chain carries Phosphoserine. Position 717 is a phosphothreonine (T717). In terms of domain architecture, Protein kinase spans 720–1019; it reads FAPTNLLGSG…GDIIDELNAI (300 aa). ATP contacts are provided by residues 726–734 and K748; that span reads LGSGSFGSV. D854 functions as the Proton acceptor in the catalytic mechanism.

This sequence belongs to the protein kinase superfamily. Ser/Thr protein kinase family. Interacts with WRKY62/XB10 in the nucleus. Interacts with SERK2. Requires Mn(2+) as cofactor. Mg(2+) serves as cofactor. Undergoes protein cleavage upon X.oryzae pv. oryzae protein Ax21 detection, thus releasing the processed protein kinase Xa21 chain. Post-translationally, autophosphorylated on serine and threonine residues; these phosphorylation prevents proteolytic degradation.

It localises to the cell membrane. The protein resides in the endoplasmic reticulum membrane. Its subcellular location is the nucleus. The catalysed reaction is L-seryl-[protein] + ATP = O-phospho-L-seryl-[protein] + ADP + H(+). It carries out the reaction L-threonyl-[protein] + ATP = O-phospho-L-threonyl-[protein] + ADP + H(+). In terms of biological role, receptor kinase that detects X.oryzae pv. oryzae protein Ax21 to promote innate immunity. Following X.oryzae pv. oryzae protein Ax21 detection, undergoes cleavage, releasing the processed protein kinase Xa21 chain. The processed protein kinase Xa21 chain released by protein cleavage after X.oryzae pv. oryzae protein Ax21 detection translocates into the nucleus where it can bind and regulate WRKY62, a transcription factor. Confers resistance to the bacterial pathogen X.oryzae pv. oryzae (Xoo). This Oryza sativa subsp. japonica (Rice) protein is Receptor kinase-like protein Xa21.